Here is a 187-residue protein sequence, read N- to C-terminus: Threonylcarbamoyl-AMP synthase (187 aa).

The YrdC-like domain occupies 4–187 (QSTIAAAITC…DAMNGKVFRG (184 aa)).

It belongs to the SUA5 family. TsaC subfamily.

The protein resides in the cytoplasm. It carries out the reaction L-threonine + hydrogencarbonate + ATP = L-threonylcarbamoyladenylate + diphosphate + H2O. In terms of biological role, required for the formation of a threonylcarbamoyl group on adenosine at position 37 (t(6)A37) in tRNAs that read codons beginning with adenine. Catalyzes the conversion of L-threonine, HCO(3)(-)/CO(2) and ATP to give threonylcarbamoyl-AMP (TC-AMP) as the acyladenylate intermediate, with the release of diphosphate. This chain is Threonylcarbamoyl-AMP synthase, found in Pseudoalteromonas translucida (strain TAC 125).